Reading from the N-terminus, the 488-residue chain is Probable Xaa-Pro aminopeptidase ATEG_00858 (488 aa).

Mn(2+) is bound by residues D273, D284, E417, and E456.

It belongs to the peptidase M24B family. Mn(2+) is required as a cofactor.

The catalysed reaction is Release of any N-terminal amino acid, including proline, that is linked to proline, even from a dipeptide or tripeptide.. Functionally, catalyzes the removal of a penultimate prolyl residue from the N-termini of peptides. The protein is Probable Xaa-Pro aminopeptidase ATEG_00858 of Aspergillus terreus (strain NIH 2624 / FGSC A1156).